Here is a 176-residue protein sequence, read N- to C-terminus: MDLPGPIHDFLLVFLGSGLLVGGLGVVLLPNPIFSAFSLGFVLFCISLLYILSNSHFVAAAQLLIYVGAINVLIIFAVMFMNDSEYSTDFNLWTVGNGITSLVCTTILFSLLSTILDTSWYGVIWTTRLNQILEQDLISNSQQIGIHLSTDFFLPFELISIILLVALIGAISVARQ.

A run of 5 helical transmembrane segments spans residues 10 to 30 (FLLV…VLLP), 32 to 52 (PIFS…LYIL), 61 to 81 (AQLL…VMFM), 92 to 112 (LWTV…FSLL), and 152 to 172 (FFLP…GAIS).

This sequence belongs to the complex I subunit 6 family. NDH is composed of at least 16 different subunits, 5 of which are encoded in the nucleus.

It localises to the plastid. The protein localises to the chloroplast thylakoid membrane. The enzyme catalyses a plastoquinone + NADH + (n+1) H(+)(in) = a plastoquinol + NAD(+) + n H(+)(out). It catalyses the reaction a plastoquinone + NADPH + (n+1) H(+)(in) = a plastoquinol + NADP(+) + n H(+)(out). In terms of biological role, NDH shuttles electrons from NAD(P)H:plastoquinone, via FMN and iron-sulfur (Fe-S) centers, to quinones in the photosynthetic chain and possibly in a chloroplast respiratory chain. The immediate electron acceptor for the enzyme in this species is believed to be plastoquinone. Couples the redox reaction to proton translocation, and thus conserves the redox energy in a proton gradient. The polypeptide is NAD(P)H-quinone oxidoreductase subunit 6, chloroplastic (ndhG) (Lepidium virginicum (Virginia pepperweed)).